Consider the following 209-residue polypeptide: Glutathione S-transferase 1-1 (209 aa).

One can recognise a GST N-terminal domain in the interval 1-81; sequence MADFYYLPGS…YLVEKYGKTD (81 aa). Glutathione contacts are provided by residues Ser10, 51–53, and 65–67; these read HTI and ESR. One can recognise a GST C-terminal domain in the interval 87–209; sequence CPKKRAVINQ…GCLEFKKYFE (123 aa).

The protein belongs to the GST superfamily. Theta family. Homodimer.

The catalysed reaction is RX + glutathione = an S-substituted glutathione + a halide anion + H(+). The enzyme catalyses 1,1,1-trichloro-2,2-bis(4-chlorophenyl)ethane = 1,1-dichloro-2,2-bis(4-chlorophenyl)ethylene + chloride + H(+). Functionally, conjugation of reduced glutathione to a wide number of exogenous and endogenous hydrophobic electrophiles. Has DDT dehydrochlorinase activity. The polypeptide is Glutathione S-transferase 1-1 (GstD1) (Drosophila simulans (Fruit fly)).